We begin with the raw amino-acid sequence, 219 residues long: Triosephosphate isomerase (219 aa).

Residue 6–8 (NYK) participates in substrate binding. Histidine 90 functions as the Electrophile in the catalytic mechanism. Glutamate 138 functions as the Proton acceptor in the catalytic mechanism. Substrate contacts are provided by residues isoleucine 143, glycine 178, and 199-200 (AS).

The protein belongs to the triosephosphate isomerase family. As to quaternary structure, homotetramer; dimer of dimers.

It is found in the cytoplasm. It catalyses the reaction D-glyceraldehyde 3-phosphate = dihydroxyacetone phosphate. The protein operates within carbohydrate biosynthesis; gluconeogenesis. It functions in the pathway carbohydrate degradation; glycolysis; D-glyceraldehyde 3-phosphate from glycerone phosphate: step 1/1. Functionally, involved in the gluconeogenesis. Catalyzes stereospecifically the conversion of dihydroxyacetone phosphate (DHAP) to D-glyceraldehyde-3-phosphate (G3P). The chain is Triosephosphate isomerase from Methanocaldococcus jannaschii (strain ATCC 43067 / DSM 2661 / JAL-1 / JCM 10045 / NBRC 100440) (Methanococcus jannaschii).